Here is a 212-residue protein sequence, read N- to C-terminus: ATP phosphoribosyltransferase 2 (212 aa).

It belongs to the ATP phosphoribosyltransferase family. Short subfamily. Heteromultimer composed of HisG and HisZ subunits.

Its subcellular location is the cytoplasm. It catalyses the reaction 1-(5-phospho-beta-D-ribosyl)-ATP + diphosphate = 5-phospho-alpha-D-ribose 1-diphosphate + ATP. The protein operates within amino-acid biosynthesis; L-histidine biosynthesis; L-histidine from 5-phospho-alpha-D-ribose 1-diphosphate: step 1/9. In terms of biological role, catalyzes the condensation of ATP and 5-phosphoribose 1-diphosphate to form N'-(5'-phosphoribosyl)-ATP (PR-ATP). Has a crucial role in the pathway because the rate of histidine biosynthesis seems to be controlled primarily by regulation of HisG enzymatic activity. This chain is ATP phosphoribosyltransferase 2 (hisG2), found in Geobacter sulfurreducens (strain ATCC 51573 / DSM 12127 / PCA).